A 202-amino-acid polypeptide reads, in one-letter code: dTTP/UTP pyrophosphatase (202 aa).

Asp-76 acts as the Proton acceptor in catalysis.

This sequence belongs to the Maf family. YhdE subfamily. A divalent metal cation serves as cofactor.

It is found in the cytoplasm. The catalysed reaction is dTTP + H2O = dTMP + diphosphate + H(+). It carries out the reaction UTP + H2O = UMP + diphosphate + H(+). In terms of biological role, nucleoside triphosphate pyrophosphatase that hydrolyzes dTTP and UTP. May have a dual role in cell division arrest and in preventing the incorporation of modified nucleotides into cellular nucleic acids. The polypeptide is dTTP/UTP pyrophosphatase (Neisseria meningitidis serogroup B (strain ATCC BAA-335 / MC58)).